Consider the following 822-residue polypeptide: Collagen alpha chain CG42342 (822 aa).

2 disordered regions span residues 1–45 (MRKH…VEAP) and 66–99 (RLAP…KERP). The Cytoplasmic portion of the chain corresponds to 1–104 (MRKHKAPPSG…SKERPRPTVR (104 aa)). Over residues 11-25 (SPRTMAQDNSQSEPS) the composition is skewed to polar residues. The span at 76 to 94 (INNSNNNSNISNNSSNSSS) shows a compositional bias: low complexity. The chain crosses the membrane as a helical; Signal-anchor for type II membrane protein span at residues 105–125 (FISLLHVASYVLCLCAFSFAL). Over 126 to 822 (YGNVRQTRLE…EYQDNLHNNE (697 aa)) the chain is Extracellular. Residues 131–162 (QTRLEQRMQRLQQLDARIVELELRLEQQQLLH) are a coiled coil. 3 disordered regions span residues 169–188 (QVLA…NGSQ), 205–297 (VSHL…GHPG), and 345–822 (LKGE…HNNE). A coiled-coil region spans residues 194–222 (VRRELHRLRRDVSHLQLTRRQQRRQAAEA). Collagen-like domains are found at residues 241 to 299 (QPGP…PGMD), 350 to 409 (GEPG…KGDR), 430 to 469 (GPPG…GKRG), 493 to 526 (RGPP…PGSL), 527 to 586 (GPRG…KGDK), 621 to 680 (GPPG…SGKA), and 681 to 740 (GIPG…KGEQ). The segment covering 242 to 251 (PGPPGPPGPP) has biased composition (pro residues). Residues 284-293 (PGDKGQKGDV) show a composition bias toward basic and acidic residues. The span at 360–402 (EAGQPGAPGERGPPGEIGAQGPQGEAGQPGVAGPPGVAGAPGT) shows a compositional bias: low complexity. Residues 403–412 (KGDKGDRGDR) show a composition bias toward basic and acidic residues. The segment covering 431-443 (PPGPAGPPGPPGE) has biased composition (pro residues). Positions 504-517 (KDGRDGRDGSKGEP) are enriched in basic and acidic residues. Positions 522 to 540 (EPGSLGPRGLDGLPGEPGI) are enriched in low complexity. The span at 567 to 579 (LMGPPGLPGPPGY) shows a compositional bias: pro residues. Basic and acidic residues predominate over residues 583-602 (KGDKGDRGDSYRKMRRRQDD). The span at 619–628 (PPGPPGPMGP) shows a compositional bias: pro residues. Residues 638-655 (RGLDGRKGDPGEKGHKGD) show a composition bias toward basic and acidic residues. The segment covering 658–668 (PMGLPGPMGMR) has biased composition (low complexity). Residues 790–822 (TSDYEQEEEEDDEQAEDNENEYDEYQDNLHNNE) are a coiled coil. The span at 793–815 (YEQEEEEDDEQAEDNENEYDEYQ) shows a compositional bias: acidic residues.

Its subcellular location is the cell membrane. The protein is Collagen alpha chain CG42342 of Drosophila melanogaster (Fruit fly).